The sequence spans 643 residues: MAEFETTFADLGLKAPILEALTDLGYEKPSPIQAECIPHLLDGRDVLGMAQTGSGKTAAFSLPLLNNIDPELRAPQILVLAPTRELAVQVAEAMTEFSKHMRGVNVVALYGGQRYDVQLRALRQGPQIVVGTPGRLLDHLKRGTLDLSKLSGLVLDEADEMLRMGFIEDVETIMAQIPEGHQTALFSATMPEAIRRITRRFMKEPQEVRIQSSVTTRPDISQSYWTAYGMRKNEALVRFLEAEDFDAAIIFVRTKNATLEVAEALERNGYNSAALNGDMNQALREQALERLKDGRLDILIATDVAARGLDVERISLVVNYDIPMDSESYVHRIGRTGRAGRAGRALLFVENRERRLLRNIERTMKLTIPEVELPNAELLSKRRLEKFAAKVQQQLESSDLDQYRALLAKIHATAEGEELDVETLAAALLKMAQGERSLIVPPVAPMRPRREFRDRDDSFDRRGDRNDRGPRGDREDRPKRERRDVGDMELYRIEVGRDDGVEVRHIVGAIANEGDISSRYIGNIKLFASHSTIELPKGMPGEVLQHFTRTRILNKPMNMQLLGDAQPRTERRGGGERREGGRGFGGERREGGRGFGGERREGGRGEGRRFSGERREGRAPGRDDASAPRRDDSAGRRRFGGDA.

A Q motif motif is present at residues threonine 6 to alanine 34. The Helicase ATP-binding domain maps to isoleucine 37–valine 208. Alanine 50–threonine 57 is a binding site for ATP. The DEAD box signature appears at aspartate 156–aspartate 159. One can recognise a Helicase C-terminal domain in the interval lysine 232 to leucine 379. Disordered regions lie at residues valine 440 to arginine 482 and methionine 557 to alanine 643. Basic and acidic residues-rich tracts occupy residues proline 448–arginine 482 and proline 567–alanine 643.

The protein belongs to the DEAD box helicase family. DeaD/CsdA subfamily.

It localises to the cytoplasm. The catalysed reaction is ATP + H2O = ADP + phosphate + H(+). Its function is as follows. DEAD-box RNA helicase involved in various cellular processes at low temperature, including ribosome biogenesis, mRNA degradation and translation initiation. In Klebsiella pneumoniae, this protein is ATP-dependent RNA helicase DeaD.